We begin with the raw amino-acid sequence, 134 residues long: Thionin-2.2 (134 aa).

An N-terminal signal peptide occupies residues 1–24; the sequence is MEGKTVISSLLIMSLVLAQIQVEA. Cystine bridges form between Cys27–Cys64, Cys28–Cys56, and Cys40–Cys50. A propeptide spans 71–134 (acidic domain); the sequence is DILENSGDAV…GGSTAAVKSA (64 aa).

This sequence belongs to the plant thionin (TC 1.C.44) family. As to expression, low basal expression in seedlings. Also detected in rosette leaves.

Its subcellular location is the secreted. In terms of biological role, thionins are small plant proteins which are toxic to animal cells. They seem to exert their toxic effect at the level of the cell membrane. Their precise function is not known. The sequence is that of Thionin-2.2 (THI2.2) from Arabidopsis thaliana (Mouse-ear cress).